A 238-amino-acid chain; its full sequence is Orotidine 5'-phosphate decarboxylase (238 aa).

Substrate-binding positions include Asp10, Lys32, 59 to 68 (DLKLHDIPNT), Thr122, Arg184, Gln193, Gly213, and Arg214. The active-site Proton donor is Lys61.

This sequence belongs to the OMP decarboxylase family. Type 1 subfamily. Homodimer.

The enzyme catalyses orotidine 5'-phosphate + H(+) = UMP + CO2. The protein operates within pyrimidine metabolism; UMP biosynthesis via de novo pathway; UMP from orotate: step 2/2. Catalyzes the decarboxylation of orotidine 5'-monophosphate (OMP) to uridine 5'-monophosphate (UMP). In Bacillus cereus (strain G9842), this protein is Orotidine 5'-phosphate decarboxylase.